A 904-amino-acid chain; its full sequence is Transcription factor E2F7 (904 aa).

Positions 61 to 80 (TPDRNPITPVKPVDRQPQVE) are disordered. Ser-96 is subject to Phosphoserine. Residues 143 to 212 (RKQKSLGLLC…VAKNQYGWHG (70 aa)) mediate DNA binding. The segment covering 252-269 (GERRKDGSPDPRDPHLLD) has biased composition (basic and acidic residues). Residues 252–283 (GERRKDGSPDPRDPHLLDFSEADYPSSSANSR) are disordered. A DNA-binding region spans residues 283–368 (RKDKSLRIMS…GRKPAFKWIG (86 aa)). The residue at position 411 (Ser-411) is a Phosphoserine. Positions 560–628 (LSPESRSEED…VMPKKPSSST (69 aa)) are disordered. Ser-833 bears the Phosphoserine mark. Residues 846 to 904 (AEQSPAPATPKSIQRRHRETFFKTPGSLGDPVFRRKERNQSRNTSSAQRRLEISSSGPD) form a disordered region. Positions 886-904 (SRNTSSAQRRLEISSSGPD) are enriched in polar residues.

The protein belongs to the E2F/DP family. Interacts with HIF1A. Homodimer and heterodimer: mainly forms homodimers and, to a lesser extent, heterodimers with E2F8. Dimerization is important for DNA-binding. Interacts with MN1. Widely expressed with highest levels in skin and thymus and very low levels in brain, muscle and stomach. Expressed in trophoblast giant cells throughout placenta development (at protein level).

It localises to the nucleus. Atypical E2F transcription factor that participates in various processes such as angiogenesis, polyploidization of specialized cells and DNA damage response. Mainly acts as a transcription repressor that binds DNA independently of DP proteins and specifically recognizes the E2 recognition site 5'-TTTC[CG]CGC-3'. Directly represses transcription of classical E2F transcription factors such as E2F1. Acts as a regulator of S-phase by recognizing and binding the E2-related site 5'-TTCCCGCC-3' and mediating repression of G1/S-regulated genes. Plays a key role in polyploidization of cells in placenta and liver by regulating the endocycle, probably by repressing genes promoting cytokinesis and antagonizing action of classical E2F proteins (E2F1, E2F2 and/or E2F3). Required for placental development by promoting polyploidization of trophoblast giant cells. Also involved in DNA damage response: up-regulated by p53/TP53 following genotoxic stress and acts as a downstream effector of p53/TP53-dependent repression by mediating repression of indirect p53/TP53 target genes involved in DNA replication. Acts as a promoter of sprouting angiogenesis, possibly by acting as a transcription activator: associates with HIF1A, recognizes and binds the VEGFA promoter, which is different from canonical E2 recognition site, and activates expression of the VEGFA gene. Acts as a negative regulator of keratinocyte differentiation. The sequence is that of Transcription factor E2F7 (E2f7) from Mus musculus (Mouse).